The primary structure comprises 217 residues: Cytidylate kinase (217 aa).

11-19 provides a ligand contact to ATP; that stretch reads GPAGAGKST.

Belongs to the cytidylate kinase family. Type 1 subfamily.

Its subcellular location is the cytoplasm. It catalyses the reaction CMP + ATP = CDP + ADP. It carries out the reaction dCMP + ATP = dCDP + ADP. The polypeptide is Cytidylate kinase (Clostridium perfringens (strain SM101 / Type A)).